Consider the following 85-residue polypeptide: Large ribosomal subunit protein bL27 (85 aa).

The disordered stretch occupies residues 1-22; the sequence is MAHKKGQGSSRNGRDSPGQHRG.

Belongs to the bacterial ribosomal protein bL27 family.

The protein is Large ribosomal subunit protein bL27 of Anaeromyxobacter sp. (strain Fw109-5).